The chain runs to 706 residues: Methionine--tRNA ligase (706 aa).

Residues 13 to 23 carry the 'HIGH' region motif; that stretch reads PYANGSIHLGH. Cysteine 144, cysteine 147, cysteine 157, and cysteine 160 together coordinate Zn(2+). The 'KMSKS' region signature appears at 336 to 340; the sequence is KMSKS. ATP is bound at residue lysine 339. Residues 570 to 593 form a disordered region; the sequence is QQTMNTETESHSPQRHGQAQQHPV. Residues 604–706 enclose the tRNA-binding domain; that stretch reads DFVKIDLRIA…SGAQPGMRVK (103 aa).

The protein belongs to the class-I aminoacyl-tRNA synthetase family. MetG type 1 subfamily. As to quaternary structure, homodimer. The cofactor is Zn(2+).

It is found in the cytoplasm. It catalyses the reaction tRNA(Met) + L-methionine + ATP = L-methionyl-tRNA(Met) + AMP + diphosphate. Is required not only for elongation of protein synthesis but also for the initiation of all mRNA translation through initiator tRNA(fMet) aminoacylation. The sequence is that of Methionine--tRNA ligase from Nitrosomonas europaea (strain ATCC 19718 / CIP 103999 / KCTC 2705 / NBRC 14298).